The following is a 379-amino-acid chain: Sulfate adenylyltransferase (379 aa).

Belongs to the sulfate adenylyltransferase family.

It carries out the reaction sulfate + ATP + H(+) = adenosine 5'-phosphosulfate + diphosphate. It participates in sulfur metabolism; hydrogen sulfide biosynthesis; sulfite from sulfate: step 1/3. This is Sulfate adenylyltransferase from Cenarchaeum symbiosum (strain A).